A 255-amino-acid chain; its full sequence is Sugar fermentation stimulation protein homolog (255 aa).

Belongs to the SfsA family.

This Synechococcus sp. (strain WH7803) protein is Sugar fermentation stimulation protein homolog.